The chain runs to 685 residues: uncharacterized protein (685 aa).

Disordered stretches follow at residues alanine 78–aspartate 220, threonine 251–glutamate 280, aspartate 296–glutamate 332, and arginine 459–serine 657. Positions lysine 86 to lysine 139 form a coiled coil. 2 stretches are compositionally biased toward basic and acidic residues: residues serine 115–lysine 127 and phenylalanine 165–aspartate 181. The span at asparagine 190–asparagine 215 shows a compositional bias: low complexity. Positions leucine 263–asparagine 276 are enriched in polar residues. Residues asparagine 297–asparagine 307 show a composition bias toward low complexity. The segment covering leucine 308–serine 331 has biased composition (polar residues). Low complexity-rich tracts occupy residues asparagine 460–asparagine 474 and asparagine 481–asparagine 498. Residues arginine 499 to aspartate 515 are compositionally biased toward basic and acidic residues. A compositionally biased stretch (polar residues) spans tryptophan 520 to glutamate 530. Residues asparagine 531–asparagine 590 are compositionally biased toward low complexity. Residues histidine 591–glycine 602 show a composition bias toward polar residues. Low complexity predominate over residues asparagine 617–lysine 656.

This is an uncharacterized protein from Plasmodium falciparum (isolate 3D7).